The following is a 451-amino-acid chain: Bifunctional protein GlmU (451 aa).

The interval 1-225 (MLEIIILAAG…EYEVLGVNNR (225 aa)) is pyrophosphorylase. UDP-N-acetyl-alpha-D-glucosamine contacts are provided by residues 7–10 (LAAG), lysine 21, glutamine 72, 77–78 (GT), 99–101 (YGD), glycine 136, glutamate 150, asparagine 165, and asparagine 223. A Mg(2+)-binding site is contributed by aspartate 101. Asparagine 223 serves as a coordination point for Mg(2+). Residues 226–246 (LQQAELERIFQRQVAEELMVA) form a linker region. The interval 247 to 451 (GATLLDPARL…IKGWARPVKK (205 aa)) is N-acetyltransferase. UDP-N-acetyl-alpha-D-glucosamine contacts are provided by arginine 329 and lysine 347. Catalysis depends on histidine 359, which acts as the Proton acceptor. UDP-N-acetyl-alpha-D-glucosamine contacts are provided by tyrosine 362 and asparagine 373. Acetyl-CoA is bound by residues alanine 376, 382-383 (NY), serine 401, alanine 419, and arginine 436.

This sequence in the N-terminal section; belongs to the N-acetylglucosamine-1-phosphate uridyltransferase family. It in the C-terminal section; belongs to the transferase hexapeptide repeat family. Homotrimer. It depends on Mg(2+) as a cofactor.

Its subcellular location is the cytoplasm. It catalyses the reaction alpha-D-glucosamine 1-phosphate + acetyl-CoA = N-acetyl-alpha-D-glucosamine 1-phosphate + CoA + H(+). It carries out the reaction N-acetyl-alpha-D-glucosamine 1-phosphate + UTP + H(+) = UDP-N-acetyl-alpha-D-glucosamine + diphosphate. Its pathway is nucleotide-sugar biosynthesis; UDP-N-acetyl-alpha-D-glucosamine biosynthesis; N-acetyl-alpha-D-glucosamine 1-phosphate from alpha-D-glucosamine 6-phosphate (route II): step 2/2. It functions in the pathway nucleotide-sugar biosynthesis; UDP-N-acetyl-alpha-D-glucosamine biosynthesis; UDP-N-acetyl-alpha-D-glucosamine from N-acetyl-alpha-D-glucosamine 1-phosphate: step 1/1. The protein operates within bacterial outer membrane biogenesis; LPS lipid A biosynthesis. Functionally, catalyzes the last two sequential reactions in the de novo biosynthetic pathway for UDP-N-acetylglucosamine (UDP-GlcNAc). The C-terminal domain catalyzes the transfer of acetyl group from acetyl coenzyme A to glucosamine-1-phosphate (GlcN-1-P) to produce N-acetylglucosamine-1-phosphate (GlcNAc-1-P), which is converted into UDP-GlcNAc by the transfer of uridine 5-monophosphate (from uridine 5-triphosphate), a reaction catalyzed by the N-terminal domain. The polypeptide is Bifunctional protein GlmU (Saccharophagus degradans (strain 2-40 / ATCC 43961 / DSM 17024)).